Here is a 1756-residue protein sequence, read N- to C-terminus: Multifunctional conjugation protein TraI (1756 aa).

The interval 1–330 is DNA relaxase; that stretch reads MMSIAQVRSA…TQAIAGLSER (330 aa). Tyr-16 (O-(5'-phospho-DNA)-tyrosine intermediate; for relaxase activity) is an active-site residue. Residue Tyr-17 is the Relaxase of the active site. Mg(2+) contacts are provided by His-146, His-157, and His-159. The tract at residues 950-1500 is DNA helicase I; the sequence is GKEAVMPLME…LRDVAAGRAV (551 aa). 992–999 is a binding site for ATP; sequence GYAGVGKT. The interval 1534–1756 is required for DNA transfer, may interact with TraM; sequence RNGKSAGIWL…LQKEKTLGGD (223 aa). A coiled-coil region spans residues 1717-1753; that stretch reads QRVREAVREIARENLLQERLQQMERDMVRDLQKEKTL.

This sequence to TraI of plasmid IncFII R100. In terms of assembly, monomer. Part of the relaxosome, a complex composed of plasmid-encodes TraI, TraM, TraY and host-encoded IHF bound to the F plasmid origin of transfer (oriT). Directly contacts coupling protein TraD. Seems to directly contact TraM via its C-terminus. Mg(2+) is required as a cofactor.

It is found in the cytoplasm. The enzyme catalyses ATP-independent breakage of single-stranded DNA, followed by passage and rejoining.. The catalysed reaction is ATP + H2O = ADP + phosphate + H(+). Nicking activity (relaxase) is inhibited by bisphosphonates such as the non-competitive inhibitor imidobisphosphate (PNP), etidronic acid (ETIDRO) and clodronic acid (CLODRO). The latter 2 are competitive inhibitors, and are already used clinically to treat bone loss (marketed as Didronel and Bonefos). All 3 compounds also inhibit conjugation and kill F plasmid-containing cells. They are specific to dual tyrosine relaxases such as those found in F and related R conjugative plasmids. In terms of biological role, conjugative DNA transfer (CDT) is the unidirectional transfer of ssDNA plasmid from a donor to a recipient cell. It is the central mechanism by which antibiotic resistance and virulence factors are propagated in bacterial populations. Part of the relaxosome, which facilitates a site- and strand-specific cut in the origin of transfer by TraI, at the nic site. Relaxosome formation requires binding of IHF and TraY to the oriT region, which then facilitates binding of TraI relaxase. TraI forms a covalent 5'-phosphotyrosine intermediate linkage to the ssDNA. The transesterified T-strand moves from the donor cell to the recipient cell in a 5'to 3' direction, with the DNA helicase activity of TraI unwinding the DNA. DNA transfer occurs via the conjugative pore (transferosome) an intercellular junction mediated by a type IV secretion system, with TraD providing the means to link the relaxosome to the conjugative pore. The relaxase completes DNA transfer by reversing the covalent phosphotyrosine linkage and releasing the T-strand. Functionally, traI has also been identified as DNA helicase I. DNA. helicase I is a potent, highly processive DNA-dependent ATPase, able to unwind about 1.1 kb dsDNA per second in a 5' to 3' manner. The sequence is that of Multifunctional conjugation protein TraI (traI) from Escherichia coli (strain K12).